The primary structure comprises 1388 residues: CRISPR-associated endonuclease Cas9 2 (1388 aa).

The active-site For RuvC-like nuclease domain is D10. Positions 10, 763, and 767 each coordinate Mg(2+). Residues 771–928 (TNQGKSNSQQ…DKAGFIQRQL (158 aa)) form the HNH Cas9-type domain. Catalysis depends on H847, which acts as the Proton acceptor for HNH nuclease domain. Position 990 (H990) interacts with Mg(2+). Residues 1100 to 1109 (EQNHGLDRGK) show a composition bias toward basic and acidic residues. The segment at 1100 to 1130 (EQNHGLDRGKPKGLFNANLSSKPKPNSNENL) is disordered. The tract at residues 1102 to 1388 (NHGLDRGKPK…RIDLAKLGEG (287 aa)) is PAM-interacting domain (PI). Polar residues predominate over residues 1116-1129 (ANLSSKPKPNSNEN).

Belongs to the CRISPR-associated protein Cas9 family. Subtype II-A subfamily. In terms of assembly, monomer. Binds crRNA and tracrRNA. Mg(2+) is required as a cofactor.

Its function is as follows. CRISPR (clustered regularly interspaced short palindromic repeat) is an adaptive immune system that provides protection against mobile genetic elements (viruses, transposable elements and conjugative plasmids). CRISPR clusters contain spacers, sequences complementary to antecedent mobile elements, and target invading nucleic acids. CRISPR clusters are transcribed and processed into CRISPR RNA (crRNA). In type II CRISPR systems correct processing of pre-crRNA requires a trans-encoded small RNA (tracrRNA), endogenous ribonuclease 3 (rnc) and this protein. The tracrRNA serves as a guide for ribonuclease 3-aided processing of pre-crRNA. Subsequently Cas9/crRNA/tracrRNA endonucleolytically cleaves linear or circular dsDNA target complementary to the spacer yielding blunt ends; Cas9 is inactive in the absence of the 2 guide RNAs (gRNA). Cas9 recognizes a 3'-G-rich protospacer adjacent motif (PAM, GGG in this organism) in the CRISPR repeat sequences to help distinguish self versus nonself, as targets within the bacterial CRISPR locus do not have PAMs. PAM recognition is also required for catalytic activity. Complements the gRNA coprocessing defect in a cas9 deletion in S.pyogenes strain 370, and cuts target DNA in Cas9:gRNAs mixing experiments with S.mutans strain UA159. The polypeptide is CRISPR-associated endonuclease Cas9 2 (Streptococcus thermophilus (strain ATCC BAA-491 / LMD-9)).